A 114-amino-acid chain; its full sequence is Large ribosomal subunit protein uL22 (114 aa).

Belongs to the universal ribosomal protein uL22 family. Part of the 50S ribosomal subunit.

In terms of biological role, this protein binds specifically to 23S rRNA; its binding is stimulated by other ribosomal proteins, e.g. L4, L17, and L20. It is important during the early stages of 50S assembly. It makes multiple contacts with different domains of the 23S rRNA in the assembled 50S subunit and ribosome. Its function is as follows. The globular domain of the protein is located near the polypeptide exit tunnel on the outside of the subunit, while an extended beta-hairpin is found that lines the wall of the exit tunnel in the center of the 70S ribosome. The polypeptide is Large ribosomal subunit protein uL22 (Methylacidiphilum infernorum (isolate V4) (Methylokorus infernorum (strain V4))).